A 330-amino-acid chain; its full sequence is DNA-directed RNA polymerase subunit alpha (330 aa).

The interval 1 to 231 (MQTNLLKPKA…EQLAVFAQLE (231 aa)) is alpha N-terminal domain (alpha-NTD). Residues 250 to 330 (FDPILLRPVD…NWPPAGLDKR (81 aa)) form an alpha C-terminal domain (alpha-CTD) region.

Belongs to the RNA polymerase alpha chain family. As to quaternary structure, homodimer. The RNAP catalytic core consists of 2 alpha, 1 beta, 1 beta' and 1 omega subunit. When a sigma factor is associated with the core the holoenzyme is formed, which can initiate transcription.

It catalyses the reaction RNA(n) + a ribonucleoside 5'-triphosphate = RNA(n+1) + diphosphate. DNA-dependent RNA polymerase catalyzes the transcription of DNA into RNA using the four ribonucleoside triphosphates as substrates. In Acidovorax ebreus (strain TPSY) (Diaphorobacter sp. (strain TPSY)), this protein is DNA-directed RNA polymerase subunit alpha.